Consider the following 262-residue polypeptide: Cytochrome c oxidase subunit 3 (262 aa).

Helical transmembrane passes span 11-31 (LVEP…LTVG), 32-52 (LVMW…VMIV), 83-103 (GMVL…WAFF), 125-147 (LNAF…TVTW), 160-180 (AIQS…LQAW), 198-218 (FFVA…FLMV), and 240-260 (AWYW…IYWW).

This sequence belongs to the cytochrome c oxidase subunit 3 family. Component of the cytochrome c oxidase (complex IV, CIV), a multisubunit enzyme composed of a catalytic core of 3 subunits and several supernumerary subunits. The complex exists as a monomer or a dimer and forms supercomplexes (SCs) in the inner mitochondrial membrane with ubiquinol-cytochrome c oxidoreductase (cytochrome b-c1 complex, complex III, CIII).

It localises to the mitochondrion inner membrane. The enzyme catalyses 4 Fe(II)-[cytochrome c] + O2 + 8 H(+)(in) = 4 Fe(III)-[cytochrome c] + 2 H2O + 4 H(+)(out). Component of the cytochrome c oxidase, the last enzyme in the mitochondrial electron transport chain which drives oxidative phosphorylation. The respiratory chain contains 3 multisubunit complexes succinate dehydrogenase (complex II, CII), ubiquinol-cytochrome c oxidoreductase (cytochrome b-c1 complex, complex III, CIII) and cytochrome c oxidase (complex IV, CIV), that cooperate to transfer electrons derived from NADH and succinate to molecular oxygen, creating an electrochemical gradient over the inner membrane that drives transmembrane transport and the ATP synthase. Cytochrome c oxidase is the component of the respiratory chain that catalyzes the reduction of oxygen to water. Electrons originating from reduced cytochrome c in the intermembrane space (IMS) are transferred via the dinuclear copper A center (CU(A)) of subunit 2 and heme A of subunit 1 to the active site in subunit 1, a binuclear center (BNC) formed by heme A3 and copper B (CU(B)). The BNC reduces molecular oxygen to 2 water molecules using 4 electrons from cytochrome c in the IMS and 4 protons from the mitochondrial matrix. This chain is Cytochrome c oxidase subunit 3 (COIII), found in Branchiostoma floridae (Florida lancelet).